Reading from the N-terminus, the 326-residue chain is Homocysteine S-methyltransferase 1 (326 aa).

The Hcy-binding domain maps to 9–323; that stretch reads LLEDLIEKCG…STIKAISRDL (315 aa). Residues Cys-241, Cys-308, and Cys-309 each contribute to the Zn(2+) site.

Requires Zn(2+) as cofactor. As to expression, expressed in roots, young leaves, florets and flowers. Not detected in old leaves.

The enzyme catalyses S-methyl-L-methionine + L-homocysteine = 2 L-methionine + H(+). With respect to regulation, inhibited by L-methionine. Catalyzes methyl transfer from S-methylmethionine to homocysteine. The highest preference is for DL-homocysteine &gt;&gt; DL-cysteine. Has no selenocysteine methyltransferase activity. The chain is Homocysteine S-methyltransferase 1 (HMT1) from Brassica oleracea var. italica (Broccoli).